Consider the following 947-residue polypeptide: Zinc finger CCCH domain-containing protein 18 (947 aa).

The residue at position 1 (methionine 1) is an N-acetylmethionine. Disordered stretches follow at residues 1-218 (MDVA…PRPT), 275-295 (GGPV…TESA), and 387-921 (YTEA…TLSR). 9 positions are modified to phosphoserine: serine 6, serine 32, serine 44, serine 57, serine 63, serine 70, serine 74, serine 79, and serine 91. Over residues 73–85 (KSQDQDSEAHELS) the composition is skewed to basic and acidic residues. Residues 94–104 (EEGDDAEEDGT) are compositionally biased toward acidic residues. A Phosphothreonine modification is found at threonine 104. Phosphoserine occurs at positions 105 and 113. Residues 105–119 (SDLRDEASSVTRELD) are compositionally biased toward basic and acidic residues. Acidic residues-rich tracts occupy residues 120 to 131 (EHELDYDEEVPE) and 138 to 153 (QEEE…EEEK). Residues 160-185 (EEGKPDVQSVGEKEPTEAAKEKKKED) show a composition bias toward basic and acidic residues. Serine 168 carries the post-translational modification Phosphoserine. Acidic residues predominate over residues 186–202 (DDGEIDDGEIDDDDLEE). Basic and acidic residues predominate over residues 203–212 (GEVKDPSDRK). The segment at 214 to 240 (RPRPTCRFFMKGNCTWGMNCRFIHPGV) adopts a C3H1-type zinc-finger fold. Residues 391–479 (EPYHNYRDRE…DRDKDKEKPK (89 aa)) show a composition bias toward basic and acidic residues. Serine 482 carries the post-translational modification Phosphoserine. Residue lysine 505 forms a Glycyl lysine isopeptide (Lys-Gly) (interchain with G-Cter in SUMO2) linkage. Residues 505-515 (KRADEWKDPWR) show a composition bias toward basic and acidic residues. A phosphoserine mark is found at serine 527, serine 529, and serine 531. Over residues 540 to 601 (SASSASASNS…SRSRSFSSSP (62 aa)) the composition is skewed to low complexity. Positions 602–611 (SPSPTPSPHR) are enriched in pro residues. Residues lysine 617 and lysine 656 each participate in a glycyl lysine isopeptide (Lys-Gly) (interchain with G-Cter in SUMO2) cross-link. Residues 656 to 665 (KPGDLREARR) show a composition bias toward basic and acidic residues. 2 stretches are compositionally biased toward low complexity: residues 687–720 (GSSY…SVHS) and 731–745 (ASPV…PTPA). A compositionally biased stretch (basic and acidic residues) spans 755–769 (KKEDGVREEKRKRDP). The segment covering 773–804 (PPKSSKAPAGGKASQQAAAPQQAAPGQPQQGS) has biased composition (low complexity). Position 809 is an N6-acetyllysine (lysine 809). Lysine 812 participates in a covalent cross-link: Glycyl lysine isopeptide (Lys-Gly) (interchain with G-Cter in SUMO2). Over residues 819 to 836 (AAEKGSRKRYEPSDKDRQ) the composition is skewed to basic and acidic residues. Residues serine 837, serine 846, serine 862, serine 887, and serine 890 each carry the phosphoserine modification. Positions 887–918 (SPQSKSSSKVTSVPGKATDTATAGTKSGKAST) are enriched in low complexity. A Glycyl lysine isopeptide (Lys-Gly) (interchain with G-Cter in SUMO2) cross-link involves residue lysine 902. Residues 915 to 944 (KASTLSRREELLKQLKAVEDAIARKRAKIP) are a coiled coil.

Interacts with ZFC3H1 in a RNase-insensitive manner.

It is found in the nucleus. The protein is Zinc finger CCCH domain-containing protein 18 (Zc3h18) of Rattus norvegicus (Rat).